The sequence spans 286 residues: uncharacterized protein (286 aa).

Residues 152-182 (YPSTTTSVTPGKKGEKTTKVDGFSSPLNQDT) form a disordered region. The helical transmembrane segment at 198-218 (VLIAVTLFVSGIAITVFVIFE) threads the bilayer. A disordered region spans residues 239-278 (RRPRKEDQQPGTAESQSDTQPKKVGQEAPNSSSPKKAVEI). Residues 247-257 (QPGTAESQSDT) show a composition bias toward polar residues.

It is found in the membrane. This is an uncharacterized protein from Bos taurus (Bovine).